The following is a 187-amino-acid chain: UPF0200 protein MM_1313 (187 aa).

9-16 (GMPASGKS) is an ATP binding site.

This sequence belongs to the UPF0200 family.

In Methanosarcina mazei (strain ATCC BAA-159 / DSM 3647 / Goe1 / Go1 / JCM 11833 / OCM 88) (Methanosarcina frisia), this protein is UPF0200 protein MM_1313.